The primary structure comprises 130 residues: Small ribosomal subunit protein uS11 (130 aa).

The protein belongs to the universal ribosomal protein uS11 family. As to quaternary structure, part of the 30S ribosomal subunit.

Its function is as follows. Located on the platform of the 30S subunit. The polypeptide is Small ribosomal subunit protein uS11 (Nanoarchaeum equitans (strain Kin4-M)).